The following is a 195-amino-acid chain: Guanylate kinase (195 aa).

A Guanylate kinase-like domain is found at 7–186 (GVLLVLSSPS…SVEEISSILD (180 aa)). Residue 14 to 21 (SPSGAGKT) coordinates ATP.

Belongs to the guanylate kinase family.

It is found in the cytoplasm. It catalyses the reaction GMP + ATP = GDP + ADP. In terms of biological role, essential for recycling GMP and indirectly, cGMP. In Wolbachia sp. subsp. Brugia malayi (strain TRS), this protein is Guanylate kinase.